The chain runs to 170 residues: Putative invertase inhibitor (170 aa).

Positions 1 to 14 are cleaved as a signal peptide; that stretch reads MKLSFSLCIFFLIS. 2 disulfides stabilise this stretch: Cys-22–Cys-37 and Cys-93–Cys-133.

This sequence belongs to the PMEI family. As to expression, expressed in pollen (at protein level). Expressed in pollen.

This is Putative invertase inhibitor from Platanus orientalis (Oriental plane-tree).